Consider the following 475-residue polypeptide: 3-isopropylmalate dehydratase large subunit (475 aa).

3 residues coordinate [4Fe-4S] cluster: Cys-352, Cys-412, and Cys-415.

The protein belongs to the aconitase/IPM isomerase family. LeuC type 1 subfamily. Heterodimer of LeuC and LeuD. It depends on [4Fe-4S] cluster as a cofactor.

The catalysed reaction is (2R,3S)-3-isopropylmalate = (2S)-2-isopropylmalate. It functions in the pathway amino-acid biosynthesis; L-leucine biosynthesis; L-leucine from 3-methyl-2-oxobutanoate: step 2/4. Its function is as follows. Catalyzes the isomerization between 2-isopropylmalate and 3-isopropylmalate, via the formation of 2-isopropylmaleate. This Gluconobacter oxydans (strain 621H) (Gluconobacter suboxydans) protein is 3-isopropylmalate dehydratase large subunit.